Consider the following 283-residue polypeptide: Pre-mRNA-splicing factor CWC23 (283 aa).

In terms of domain architecture, J spans 15–87 (NLYDVLELPT…DVRPHYDRWL (73 aa)).

It belongs to the DnaJ family. As to quaternary structure, belongs to the CWC complex (or CEF1-associated complex), a spliceosome sub-complex reminiscent of a late-stage spliceosome composed of the U2, U5 and U6 snRNAs and at least BUD13, BUD31, BRR2, CDC40, CEF1, CLF1, CUS1, CWC2, CWC15, CWC21, CWC22, CWC23, CWC24, CWC25, CWC27, ECM2, HSH155, IST3, ISY1, LEA1, MSL1, NTC20, PRP8, PRP9, PRP11, PRP19, PRP21, PRP22, PRP45, PRP46, SLU7, SMB1, SMD1, SMD2, SMD3, SMX2, SMX3, SNT309, SNU114, SPP2, SYF1, SYF2, RSE1 and YJU2.

The protein resides in the cytoplasm. The protein localises to the nucleus. In terms of biological role, involved in pre-mRNA splicing. May be involved in endoplasmic reticulum-associated protein degradation (ERAD) and required for growth at low and high temperatures. The sequence is that of Pre-mRNA-splicing factor CWC23 (CWC23) from Saccharomyces cerevisiae (strain ATCC 204508 / S288c) (Baker's yeast).